Here is a 399-residue protein sequence, read N- to C-terminus: MEKRLFTSESVSEGHPDKVADQISDAILDAMLKKDPNSHVACETIVTTGMVFVFGEISTSAYVDIQDVVRKTILKIGYDRPELGFDGNNCAVMVDIDEQSPDIADGVDHSLETRENKSDNDELDQIGAGDQGLMFGFAIKETPELMPLPISLSHRLMRRVASLRKDHTLEWLRPDAKAQVTVEYDENGKPLCVDTVVISTQTDAEVSNEEICRAMIDLVIKEVIPAKYLDENTKFLINPSGRFVIGGPKGDSGLTGRKIIVDTYGGYARHGGGAFSGKDPTKVDRSASYAARYVAKNIVAAGLAYRCEVQLAYAIGVAHPVSIMIDTAGTGTVDDELLTEAVRNVFDLRPAGIIKMLDLRRPIYEQTAAYGHFGRTDVDLPWEKTDKTQALLDYIKNNQ.

Histidine 15 is a binding site for ATP. A Mg(2+)-binding site is contributed by aspartate 17. A K(+)-binding site is contributed by glutamate 43. Residues glutamate 56 and glutamine 99 each contribute to the L-methionine site. The interval 99–109 (QSPDIADGVDH) is flexible loop. ATP contacts are provided by residues 175–177 (DAK), 242–243 (RF), aspartate 251, 257–258 (RK), alanine 274, and lysine 278. Aspartate 251 is an L-methionine binding site. Lysine 282 contributes to the L-methionine binding site.

Belongs to the AdoMet synthase family. Homotetramer; dimer of dimers. The cofactor is Mg(2+). K(+) serves as cofactor.

The protein resides in the cytoplasm. The enzyme catalyses L-methionine + ATP + H2O = S-adenosyl-L-methionine + phosphate + diphosphate. Its pathway is amino-acid biosynthesis; S-adenosyl-L-methionine biosynthesis; S-adenosyl-L-methionine from L-methionine: step 1/1. In terms of biological role, catalyzes the formation of S-adenosylmethionine (AdoMet) from methionine and ATP. The overall synthetic reaction is composed of two sequential steps, AdoMet formation and the subsequent tripolyphosphate hydrolysis which occurs prior to release of AdoMet from the enzyme. In Lactobacillus acidophilus (strain ATCC 700396 / NCK56 / N2 / NCFM), this protein is S-adenosylmethionine synthase.